Reading from the N-terminus, the 221-residue chain is Probable septum site-determining protein MinC (221 aa).

It belongs to the MinC family. Interacts with MinD and FtsZ.

Its function is as follows. Cell division inhibitor that blocks the formation of polar Z ring septums. Rapidly oscillates between the poles of the cell to destabilize FtsZ filaments that have formed before they mature into polar Z rings. Prevents FtsZ polymerization. This is Probable septum site-determining protein MinC from Shewanella loihica (strain ATCC BAA-1088 / PV-4).